The primary structure comprises 450 residues: Probable ATP-dependent RNA helicase MG425 homolog (450 aa).

The short motif at 3–31 is the Q motif element; it reads STFNELGVSPALIATLKDNNINQPTTIQQ. Residues 34–206 form the Helicase ATP-binding domain; it reads IPQFLQHQNL…KQITKNGIFL (173 aa). Residue 47 to 54 participates in ATP binding; it reads SPTGTGKT. The short motif at 154 to 157 is the DEVD box element; sequence DEVD. One can recognise a Helicase C-terminal domain in the interval 234-384; that stretch reads RKKQALYSLV…PLRPMRLRLI (151 aa). The interval 429 to 450 is disordered; sequence MRQPERDMQKNKLHDSDWQSNM. The span at 430-450 shows a compositional bias: basic and acidic residues; that stretch reads RQPERDMQKNKLHDSDWQSNM.

The protein belongs to the DEAD box helicase family.

It carries out the reaction ATP + H2O = ADP + phosphate + H(+). The chain is Probable ATP-dependent RNA helicase MG425 homolog from Mycoplasma pneumoniae (strain ATCC 29342 / M129 / Subtype 1) (Mycoplasmoides pneumoniae).